The primary structure comprises 419 residues: Hyaluronidase-3 (419 aa).

The signal sequence occupies residues 1–16 (MTMQLGLALVLGVAMC). Cystine bridges form between Cys42/Cys331, Cys205/Cys220, Cys356/Cys367, Cys361/Cys395, and Cys397/Cys406. Asn69 is a glycosylation site (N-linked (GlcNAc...) asparagine). The Proton donor role is filled by Glu129. Asn215 carries an N-linked (GlcNAc...) asparagine glycan. One can recognise an EGF-like domain in the interval 352 to 407 (AAMACSHQRCHGHGRCAWQDPGQLKVFLHLHPGGSPGAWESFSCRCYWGWAGPTCQ).

Belongs to the glycosyl hydrolase 56 family. In terms of processing, N-glycosylated. As to expression, highly expressed in bladder, spleen and liver. Expressed at low levels in the kidney.

Its subcellular location is the secreted. The protein localises to the cell membrane. It localises to the cytoplasmic vesicle. The protein resides in the secretory vesicle. It is found in the acrosome. Its subcellular location is the endoplasmic reticulum. The protein localises to the early endosome. The enzyme catalyses Random hydrolysis of (1-&gt;4)-linkages between N-acetyl-beta-D-glucosamine and D-glucuronate residues in hyaluronate.. In terms of biological role, facilitates sperm penetration into the layer of cumulus cells surrounding the egg by digesting hyaluronic acid. Involved in induction of the acrosome reaction in the sperm. Involved in follicular atresia, the breakdown of immature ovarian follicles that are not selected to ovulate. Induces ovarian granulosa cell apoptosis, possibly via apoptotic signaling pathway involving CASP8 and CASP3 activation, and poly(ADP-ribose) polymerase (PARP) cleavage. Has no hyaluronidase activity in embryonic fibroblasts in vitro. Has no hyaluronidase activity in granulosa cells in vitro. The protein is Hyaluronidase-3 (HYAL3) of Sus scrofa (Pig).